A 329-amino-acid polypeptide reads, in one-letter code: 3-isopropylmalate dehydrogenase (329 aa).

The substrate site is built by Arg83, Arg93, Arg114, and Asp200. Mg(2+) is bound by residues Asp200, Asp224, and Asp228. 257–269 is a binding site for NAD(+); that stretch reads GSAPQIAGKNIAN.

This sequence belongs to the isocitrate and isopropylmalate dehydrogenases family. As to quaternary structure, homotetramer. The cofactor is Mg(2+). Mn(2+) is required as a cofactor.

It is found in the cytoplasm. It catalyses the reaction (2R,3S)-3-isopropylmalate + NAD(+) = 4-methyl-2-oxopentanoate + CO2 + NADH. Its pathway is amino-acid biosynthesis; L-leucine biosynthesis; L-leucine from 3-methyl-2-oxobutanoate: step 3/4. Catalyzes the oxidation of 3-carboxy-2-hydroxy-4-methylpentanoate (3-isopropylmalate) to 3-carboxy-4-methyl-2-oxopentanoate. The product decarboxylates to 4-methyl-2 oxopentanoate. This is 3-isopropylmalate dehydrogenase (leuB) from Methanothermobacter thermautotrophicus (strain ATCC 29096 / DSM 1053 / JCM 10044 / NBRC 100330 / Delta H) (Methanobacterium thermoautotrophicum).